The following is a 305-amino-acid chain: Lipoyl synthase (305 aa).

[4Fe-4S] cluster-binding residues include cysteine 41, cysteine 46, cysteine 52, cysteine 68, cysteine 72, cysteine 75, and serine 281. The Radical SAM core domain maps to 54–270 (GARRTATFMI…RKVAMDKGFK (217 aa)). Residues 283 to 298 (HADEQVNEAAKEKQRQ) are compositionally biased toward basic and acidic residues. Residues 283 to 305 (HADEQVNEAAKEKQRQGEAQLNS) are disordered.

It belongs to the radical SAM superfamily. Lipoyl synthase family. It depends on [4Fe-4S] cluster as a cofactor.

It is found in the cytoplasm. It carries out the reaction [[Fe-S] cluster scaffold protein carrying a second [4Fe-4S](2+) cluster] + N(6)-octanoyl-L-lysyl-[protein] + 2 oxidized [2Fe-2S]-[ferredoxin] + 2 S-adenosyl-L-methionine + 4 H(+) = [[Fe-S] cluster scaffold protein] + N(6)-[(R)-dihydrolipoyl]-L-lysyl-[protein] + 4 Fe(3+) + 2 hydrogen sulfide + 2 5'-deoxyadenosine + 2 L-methionine + 2 reduced [2Fe-2S]-[ferredoxin]. Its pathway is protein modification; protein lipoylation via endogenous pathway; protein N(6)-(lipoyl)lysine from octanoyl-[acyl-carrier-protein]. Functionally, catalyzes the radical-mediated insertion of two sulfur atoms into the C-6 and C-8 positions of the octanoyl moiety bound to the lipoyl domains of lipoate-dependent enzymes, thereby converting the octanoylated domains into lipoylated derivatives. The sequence is that of Lipoyl synthase from Staphylococcus aureus (strain Mu3 / ATCC 700698).